A 558-amino-acid chain; its full sequence is Urocanate hydratase (558 aa).

Residues glycine 54 to glycine 55, glutamine 132, glycine 178 to glycine 180, glutamate 198, asparagine 244 to alanine 245, glutamine 265 to histidine 269, tyrosine 275 to leucine 276, and tyrosine 324 each bind NAD(+). Cysteine 412 is a catalytic residue. Position 494 (glycine 494) interacts with NAD(+).

This sequence belongs to the urocanase family. NAD(+) serves as cofactor.

The protein resides in the cytoplasm. It carries out the reaction 4-imidazolone-5-propanoate = trans-urocanate + H2O. It participates in amino-acid degradation; L-histidine degradation into L-glutamate; N-formimidoyl-L-glutamate from L-histidine: step 2/3. Its function is as follows. Catalyzes the conversion of urocanate to 4-imidazolone-5-propionate. This is Urocanate hydratase from Acinetobacter baumannii (strain ACICU).